The following is a 405-amino-acid chain: MTQSQYRPGPDANGLFGSFGGRYVAETLMPLVLDLAREYEAAKADPKFLEELAYFQRDYIGRPNPLYFAERLTEHCGGAKIFFKREELNHTGAHKVNNCIGQVLLAKRMGKKRLIAETGAGMHGVATATVAARFGLPCVIYMGATDIERQQANVFRMKLLGAEIVPVTAGTGTLKDAMNEALRDWVTNVEDTFYLIGTVAGPHPYPAMVRDFQSIIGKETRAQLQEKEGRLPDSLVACVGGGSNAMGLFHEFLEEPSVQIIGVEAGGHGVHTDKHAASLNGGVPGVLHGNRTYLLQDADGQITDAHSISAGLDYPGIGPEHAYLHEVKRVEYVSITDDEALDAFHATCRLEGIIPALESSHALAEAIKRAPKLPKDHLMVVCLSGRGDKDMQTVMNHMAAQEKQA.

Lys95 bears the N6-(pyridoxal phosphate)lysine mark.

The protein belongs to the TrpB family. In terms of assembly, tetramer of two alpha and two beta chains. Pyridoxal 5'-phosphate serves as cofactor.

The enzyme catalyses (1S,2R)-1-C-(indol-3-yl)glycerol 3-phosphate + L-serine = D-glyceraldehyde 3-phosphate + L-tryptophan + H2O. Its pathway is amino-acid biosynthesis; L-tryptophan biosynthesis; L-tryptophan from chorismate: step 5/5. Functionally, the beta subunit is responsible for the synthesis of L-tryptophan from indole and L-serine. This Pseudomonas putida (strain GB-1) protein is Tryptophan synthase beta chain.